A 419-amino-acid chain; its full sequence is Peptide chain release factor subunit 1 (419 aa).

Belongs to the eukaryotic release factor 1 family. Heterodimer of two subunits, one of which binds GTP.

It is found in the cytoplasm. Functionally, directs the termination of nascent peptide synthesis (translation) in response to the termination codons UAA, UAG and UGA. The chain is Peptide chain release factor subunit 1 from Methanococcus maripaludis (strain DSM 14266 / JCM 13030 / NBRC 101832 / S2 / LL).